The sequence spans 443 residues: UDP-N-acetylmuramate--L-alanine ligase (443 aa).

110–116 (GAHGKTS) provides a ligand contact to ATP.

Belongs to the MurCDEF family.

It is found in the cytoplasm. The enzyme catalyses UDP-N-acetyl-alpha-D-muramate + L-alanine + ATP = UDP-N-acetyl-alpha-D-muramoyl-L-alanine + ADP + phosphate + H(+). Its pathway is cell wall biogenesis; peptidoglycan biosynthesis. Cell wall formation. The polypeptide is UDP-N-acetylmuramate--L-alanine ligase (Lactococcus lactis subsp. lactis (strain IL1403) (Streptococcus lactis)).